The sequence spans 156 residues: Glutaredoxin-2, mitochondrial (156 aa).

A mitochondrion-targeting transit peptide spans 1 to 19 (MSWRRAASVGRRLVASGRI). One can recognise a Glutaredoxin domain in the interval 50–150 (VNQIQETISN…PLVHQCYLKK (101 aa)). C61 is a binding site for [2Fe-2S] cluster. K67 is a glutathione binding site. At C70 the chain carries S-glutathionyl cysteine; alternate. C70 and C73 form a disulfide bridge. 2 residues coordinate glutathione: Q102 and V114. C146 provides a ligand contact to [2Fe-2S] cluster.

The protein belongs to the glutaredoxin family. Monomer; active form. Homodimer; inactive form. The homodimer is probably linked by 1 2Fe-2S cluster. As to expression, widely expressed. Highly expressed in testis, and at much lower level in kidney and brain.

The protein localises to the mitochondrion. It localises to the nucleus. The 2Fe-2S present in the homodimer leads to inactivation of the enzyme. The 2Fe-2S may serve as a redox sensor: the presence of one-electron oxidants or reductants leading to the loss of the 2Fe-2S cluster, subsequent monomerization and activation of the enzyme. Its function is as follows. Glutathione-dependent oxidoreductase that facilitates the maintenance of mitochondrial redox homeostasis upon induction of apoptosis by oxidative stress. Involved in response to hydrogen peroxide and regulation of apoptosis caused by oxidative stress. Acts as a very efficient catalyst of monothiol reactions because of its high affinity for protein glutathione-mixed disulfides. Can receive electrons not only from glutathione (GSH), but also from thioredoxin reductase supporting both monothiol and dithiol reactions. Efficiently catalyzes both glutathionylation and deglutathionylation of mitochondrial complex I, which in turn regulates the superoxide production by the complex. Overexpression decreases the susceptibility to apoptosis and prevents loss of cardiolipin and cytochrome c release. The polypeptide is Glutaredoxin-2, mitochondrial (Glrx2) (Mus musculus (Mouse)).